The following is a 436-amino-acid chain: Adenosylhomocysteinase (436 aa).

T62, D136, and E161 together coordinate substrate. An NAD(+)-binding site is contributed by 162–164; it reads TTT. The substrate site is built by K191 and D195. Residues N196, 225–230, E248, N283, 304–306, and N352 contribute to the NAD(+) site; these read GFGDVG and IGH.

It belongs to the adenosylhomocysteinase family. Requires NAD(+) as cofactor.

The protein resides in the cytoplasm. The catalysed reaction is S-adenosyl-L-homocysteine + H2O = L-homocysteine + adenosine. It functions in the pathway amino-acid biosynthesis; L-homocysteine biosynthesis; L-homocysteine from S-adenosyl-L-homocysteine: step 1/1. May play a key role in the regulation of the intracellular concentration of adenosylhomocysteine. The sequence is that of Adenosylhomocysteinase from Leptospira borgpetersenii serovar Hardjo-bovis (strain JB197).